The chain runs to 481 residues: MFS transporter eqxG (481 aa).

The segment covering 1–13 (MATTDPAIAAPDD) has biased composition (low complexity). Residues 1–58 (MATTDPAIAAPDDSQLEAGRENIRANVGDALEKPSSSTGTMVDEPTDPNVVDWDGPHD) are disordered. N-linked (GlcNAc...) asparagine glycosylation occurs at Asn64. A helical transmembrane segment spans residues 72 to 92 (LHLVIVSLFTLAANLAATMFA). Asn106 is a glycosylation site (N-linked (GlcNAc...) asparagine). 10 helical membrane-spanning segments follow: residues 111–131 (AMTV…LAPL), 146–166 (FVYV…MFLV), 169–189 (IICG…VADL), 201–221 (LFTV…TVIF), 276–296 (PIVL…FLLF), 315–335 (GLAY…FSVL), 353–373 (LILM…YGWT), 380–400 (WIVP…VVIP), 403–423 (IYLV…ANLL), and 439–459 (LYVS…CLLF).

This sequence belongs to the major facilitator superfamily.

Its subcellular location is the cell membrane. In terms of biological role, efflux pump that might be required for efficient secretion of equisetin or other secondary metabolies produced by the equisetin gene cluster. This Fusarium heterosporum protein is MFS transporter eqxG.